The sequence spans 309 residues: Cytochrome c1, heme protein, mitochondrial (309 aa).

The N-terminal 61 residues, 1–61 (MFSNLSKRWA…LYADSLTAEA (61 aa)), are a transit peptide targeting the mitochondrion. The Mitochondrial intermembrane portion of the chain corresponds to 62–262 (MTAAEHGLHA…TFLNWCAEPE (201 aa)). Positions 88–241 (ASIRRGYQVY…DMVEYEDGTP (154 aa)) constitute a Cytochrome c domain. Positions 101, 104, and 105 each coordinate heme c. The span at 131-140 (EFEYDDEPDE) shows a compositional bias: acidic residues. The tract at residues 131–168 (EFEYDDEPDEQGNPKKRPGKLSDYIPGPYPNEQAARAA) is disordered. Methionine 225 is a binding site for heme c. The chain crosses the membrane as a helical span at residues 263 to 296 (HDERKRLGLKTVIILSSLYLLSIWVKKFKWAGIK). Topologically, residues 297–309 (TRKFVFNPPKPRK) are mitochondrial matrix.

This sequence belongs to the cytochrome c family. Component of the ubiquinol-cytochrome c oxidoreductase (cytochrome b-c1 complex, complex III, CIII), a multisubunit enzyme composed of 10 subunits. The complex is composed of 3 respiratory subunits cytochrome b (COB), cytochrome c1 (CYT1) and Rieske protein (RIP1), 2 core protein subunits COR1 and QCR2, and 5 low-molecular weight protein subunits QCR6, QCR7, QCR8, QCR9 and QCR10. The complex exists as an obligatory dimer and forms supercomplexes (SCs) in the inner mitochondrial membrane with a monomer or a dimer of cytochrome c oxidase (complex IV, CIV), resulting in 2 different assemblies (supercomplexes III(2)IV and III(2)IV(2)). CYT1 interacts with COX5A at the CIII-CIV interface. It depends on heme c as a cofactor.

The protein resides in the mitochondrion inner membrane. The enzyme catalyses a quinol + 2 Fe(III)-[cytochrome c](out) = a quinone + 2 Fe(II)-[cytochrome c](out) + 2 H(+)(out). Its function is as follows. Component of the ubiquinol-cytochrome c oxidoreductase, a multisubunit transmembrane complex that is part of the mitochondrial electron transport chain which drives oxidative phosphorylation. The respiratory chain contains 3 multisubunit complexes succinate dehydrogenase (complex II, CII), ubiquinol-cytochrome c oxidoreductase (cytochrome b-c1 complex, complex III, CIII) and cytochrome c oxidase (complex IV, CIV), that cooperate to transfer electrons derived from NADH and succinate to molecular oxygen, creating an electrochemical gradient over the inner membrane that drives transmembrane transport and the ATP synthase. The cytochrome b-c1 complex catalyzes electron transfer from ubiquinol to cytochrome c, linking this redox reaction to translocation of protons across the mitochondrial inner membrane, with protons being carried across the membrane as hydrogens on the quinol. In the process called Q cycle, 2 protons are consumed from the matrix, 4 protons are released into the intermembrane space and 2 electrons are passed to cytochrome c. Cytochrome c1 is a catalytic core subunit containing a c-type heme. It transfers electrons from the [2Fe-2S] iron-sulfur cluster of the Rieske protein to cytochrome c. This is Cytochrome c1, heme protein, mitochondrial (CYT1) from Saccharomyces cerevisiae (strain ATCC 204508 / S288c) (Baker's yeast).